The following is an 828-amino-acid chain: Calpain-A (828 aa).

Positions 1–14 (MDDLRGFLRQAGQE) constitute an EF-hand 1 domain. One can recognise a Calpain catalytic domain in the interval 88-387 (LFEDPLFPAS…FDRVEICNLS (300 aa)). Catalysis depends on residues Cys143, His299, and Asn327. Residues 388-557 (PDSLTEDQQN…TQNNMEENDD (170 aa)) form a domain III region. Positions 558–577 (HVGYGGKADTITPGFPTPKP) are linker. The tract at residues 578–828 (IDPQKEGLRR…EEWIERTIYS (251 aa)) is domain IV. EF-hand domains follow at residues 579–614 (DPQK…SMRD), 699–734 (FSKD…IAKW), 729–764 (SEIA…AGYH), and 764–799 (HLNN…IKTY). Residues Asp712, Asp714, Ser716, Lys718, Glu723, Asp742, Thr746, Arg748, and Gln753 each coordinate Ca(2+).

This sequence belongs to the peptidase C2 family. Undergoes calcium-dependent autolytic cleavage between Lys-54 and Asn-55, which is necessary for activation of the protein. In terms of tissue distribution, localized to the anterior and posterior embryonic poles just after fertilization. Becomes distributed around the polar buds and just below the pole cells of the posterior pole during cleavage cycles. During these nuclear divisions anterior localization disappears. Localized to actin caps that underlie the plasma membrane, immediately above each nucleus at cleavage cycles 8 and 9. Localized to a small set of nerve, midgut and blood cells in adults.

The protein localises to the cytoplasm. Activated by millimolar concentrations of calcium, and by phosphatidylinositol 4,5-diphosphate, phosphatidylinositol 4-monophosphate, phosphatidylinositol and phosphatidic acid. Functionally, calcium-regulated non-lysosomal thiol-protease. Involved in the organization of the actin-related cytoskeleton during embryogenesis. The chain is Calpain-A (CalpA) from Drosophila melanogaster (Fruit fly).